The primary structure comprises 255 residues: MRSEQPLYNKRLFSDIIDKSTHFKEGLGLDKQKYLLDEVKRIEDLKRYEYEAYNNGFRYIAGIDEAGRGPIAGPVMAAAVILSRDFFCPGINDSKKLTALKRSKLAAEIKKQAISWSVAAVFPSYLDKVNILNATREAMLLAVKNLSPRPEFLLIDAVQLPDIDIKQYPLIKGDSLSVSIAAASILAKVERDRVMEAFDSLYPGYGFSRHKGYATREHLQSLLRLGTCALHRVSFEPVKSMVLGARYGEQPALFE.

The region spanning 58-247 is the RNase H type-2 domain; the sequence is RYIAGIDEAG…VKSMVLGARY (190 aa). A divalent metal cation-binding residues include D64, E65, and D156.

The protein belongs to the RNase HII family. Mn(2+) serves as cofactor. It depends on Mg(2+) as a cofactor.

The protein localises to the cytoplasm. The enzyme catalyses Endonucleolytic cleavage to 5'-phosphomonoester.. Functionally, endonuclease that specifically degrades the RNA of RNA-DNA hybrids. This Syntrophomonas wolfei subsp. wolfei (strain DSM 2245B / Goettingen) protein is Ribonuclease HII.